The following is a 291-amino-acid chain: Ubiquinone biosynthesis protein COQ4, mitochondrial (291 aa).

Residues 1–37 (MLGRRSVSLLRGLTELPVSSRAHTALRALSVPQTRRN) constitute a mitochondrion transit peptide. Residues His169, Asp170, His173, and Glu185 each contribute to the Zn(2+) site. The span at 271–283 (PLNEAKEAAERRS) shows a compositional bias: basic and acidic residues. The segment at 271 to 291 (PLNEAKEAAERRSKTTQNQIY) is disordered.

The protein belongs to the COQ4 family. As to quaternary structure, component of a multi-subunit COQ enzyme complex, composed of at least COQ3, COQ4, COQ5, COQ6, COQ7 and COQ9. It depends on Zn(2+) as a cofactor.

It is found in the mitochondrion inner membrane. It carries out the reaction a 4-hydroxy-3-methoxy-5-(all-trans-polyprenyl)benzoate + H(+) = a 2-methoxy-6-(all-trans-polyprenyl)phenol + CO2. The protein operates within cofactor biosynthesis; ubiquinone biosynthesis. Functionally, lyase that catalyzes the C1-decarboxylation of 4-hydroxy-3-methoxy-5-(all-trans-polyprenyl)benzoic acid into 2-methoxy-6-(all-trans-polyprenyl)phenol during ubiquinone biosynthesis. The polypeptide is Ubiquinone biosynthesis protein COQ4, mitochondrial (Coprinopsis cinerea (strain Okayama-7 / 130 / ATCC MYA-4618 / FGSC 9003) (Inky cap fungus)).